The following is a 141-amino-acid chain: MHSSTILFVLGAAILAVNGVTTALIDDEVDKGTQEKHRLLRSNLMKHETGEERFELPAWFIGSKAYKQRKRERYEQAKRYYYTLVQDKNHDETFRELDTKRKTLKSALKFIAWNYKGFSNYTKRRIRKKYTAYRIKNPRPW.

Residues Met-1–Gly-19 form the signal peptide. A RxLR-dEER motif is present at residues Arg-38 to Arg-53. Asn-120 carries an N-linked (GlcNAc...) asparagine glycan.

This sequence belongs to the RxLR effector family.

Its subcellular location is the secreted. It localises to the host nucleus. Secreted effector that completely suppresses the host cell death induced by cell death-inducing proteins. In Plasmopara viticola (Downy mildew of grapevine), this protein is Secreted RxLR effector protein 69.